A 309-amino-acid polypeptide reads, in one-letter code: MRKIIVGSRKSKLALTQTNWFIDQLKALGLPYEFEVKEIVTKGDVILDVTLSKVGGKGLFVKEIEHALLTKEIDMAVHSMKDMPAVLPEGLMIGCTPKRVDPRDAFISKNGASFKELAEGAILGTSSLRRSAQLLAARPDLQVKWIRGNIDTRLRKLKEEDYDAIILATAGLQRMGWDNDVITEHLDDTLCVPAVGQGALAIECREDDKDLLQLLAHINDTITERTVAAERVFLHKLEGGCQVPIAGYATLTENDAIELTALVGSMDGSVLLKETVVGTNPEEVGLEAADRLIKQGAKELILAANKEQQ.

Cys-241 is subject to S-(dipyrrolylmethanemethyl)cysteine.

The protein belongs to the HMBS family. In terms of assembly, monomer. It depends on dipyrromethane as a cofactor.

The catalysed reaction is 4 porphobilinogen + H2O = hydroxymethylbilane + 4 NH4(+). Its pathway is porphyrin-containing compound metabolism; protoporphyrin-IX biosynthesis; coproporphyrinogen-III from 5-aminolevulinate: step 2/4. Its function is as follows. Tetrapolymerization of the monopyrrole PBG into the hydroxymethylbilane pre-uroporphyrinogen in several discrete steps. In Bacillus cereus (strain B4264), this protein is Porphobilinogen deaminase.